The primary structure comprises 238 residues: Cysteine-rich venom protein pseudechetoxin-like (238 aa).

The first 19 residues, 1–19, serve as a signal peptide directing secretion; sequence MIAFIVLLSLAAVLQQSSG. The propeptide occupies 20–28; sequence TVDFASESS. Residues 38-164 enclose the SCP domain; it reads VDKHNALRRS…STKYLYVCQY (127 aa). 8 cysteine pairs are disulfide-bonded: Cys-75-Cys-153, Cys-92-Cys-165, Cys-148-Cys-162, Cys-184-Cys-191, Cys-187-Cys-196, Cys-200-Cys-233, Cys-209-Cys-227, and Cys-218-Cys-231. One can recognise a ShKT domain in the interval 200-233; it reads CKHEDDFSNCKALAKNSKCQTAWIKSKCPATCFC.

Belongs to the CRISP family. Expressed by the venom gland.

It localises to the secreted. Functionally, blocks olfactory (CNGA2) and retinal (CNGA1) CNG channel currents. Does not affect neither depolarization- nor caffeine-induced contraction of smooth muscle. The protein is Cysteine-rich venom protein pseudechetoxin-like of Hoplocephalus stephensii (Stephens's banded snake).